Consider the following 542-residue polypeptide: Malolactic enzyme (542 aa).

Y92 (proton donor) is an active-site residue. The active-site Proton acceptor is K165. Substrate is bound at residue K165. The Mn(2+) site is built by E236, D237, and D260. Residues 293–296 (AGTA), N405, and N450 each bind NAD(+). Residue N450 participates in substrate binding.

The protein belongs to the malic enzymes family. As to quaternary structure, homodimer. It depends on Mn(2+) as a cofactor. The cofactor is NAD(+).

It catalyses the reaction (S)-malate + H(+) = (S)-lactate + CO2. Its activity is regulated as follows. Oxamate, fructose-1,6-diphosphate and L-lactate act as non-competitive inhibitors, whereas succinate, citrate and tartrate isomers produce a competitive inhibition. Functionally, involved in the malolactic fermentation (MLF) of wine, which results in a natural decrease in acidity and favorable changes in wine flavors. Catalyzes the decarboxylation of L-malate to L-lactate. This Leuconostoc mesenteroides protein is Malolactic enzyme (mleS).